We begin with the raw amino-acid sequence, 320 residues long: Phosphate acetyltransferase (320 aa).

The protein belongs to the phosphate acetyltransferase and butyryltransferase family.

It is found in the cytoplasm. The catalysed reaction is acetyl-CoA + phosphate = acetyl phosphate + CoA. Its pathway is metabolic intermediate biosynthesis; acetyl-CoA biosynthesis; acetyl-CoA from acetate: step 2/2. The sequence is that of Phosphate acetyltransferase (pta) from Mycoplasma pneumoniae (strain ATCC 29342 / M129 / Subtype 1) (Mycoplasmoides pneumoniae).